Consider the following 346-residue polypeptide: B3 domain-containing protein At3g25182 (346 aa).

Positions 168–187 (KRRAVEQRKRTGGVKKAKVA) are disordered. The segment at residues 237-338 (FNNLLRNDFL…ILCFAMEQRS (102 aa)) is a DNA-binding region (TF-B3).

The protein localises to the nucleus. The polypeptide is B3 domain-containing protein At3g25182 (Arabidopsis thaliana (Mouse-ear cress)).